A 246-amino-acid chain; its full sequence is E3 ubiquitin-protein ligase MARCHF2 (246 aa).

The RING-CH-type zinc-finger motif lies at 56 to 116 (GTQSDGPICR…ELCHTEFAVE (61 aa)). The Zn(2+) site is built by C64, C67, C80, C82, H90, C93, C106, and C109. 2 helical membrane passes run 138 to 158 (LFCDMVCFLFITPLAAISGWL) and 175 to 195 (AVGLIALTIALFTIYVLWTLV).

It localises to the endoplasmic reticulum membrane. It is found in the lysosome membrane. The protein resides in the endosome membrane. The enzyme catalyses S-ubiquitinyl-[E2 ubiquitin-conjugating enzyme]-L-cysteine + [acceptor protein]-L-lysine = [E2 ubiquitin-conjugating enzyme]-L-cysteine + N(6)-ubiquitinyl-[acceptor protein]-L-lysine.. It participates in protein modification; protein ubiquitination. Its function is as follows. E3 ubiquitin-protein ligase which may be involved in endosomal trafficking. E3 ubiquitin ligases accept ubiquitin from an E2 ubiquitin-conjugating enzyme in the form of a thioester and then directly transfer the ubiquitin to targeted substrates. The chain is E3 ubiquitin-protein ligase MARCHF2 (marchf2) from Xenopus tropicalis (Western clawed frog).